A 359-amino-acid polypeptide reads, in one-letter code: DNA-directed RNA polymerase RPB3-11 homolog (359 aa).

It in the N-terminal section; belongs to the archaeal RpoD/eukaryotic RPB3 RNA polymerase subunit family. The protein in the C-terminal section; belongs to the archaeal RpoL/eukaryotic RPB11/RPC19 RNA polymerase subunit family. As to quaternary structure, part of the viral DNA-directed RNA polymerase that consists of 8 polII-like subunits (RPB1, RPB2, RPB3, RPB5, RPB6, RPB7, RPB9, RPB10), a capping enzyme and a termination factor.

The protein resides in the host cytoplasm. It localises to the virion. In terms of biological role, component of the DNA-directed RNA polymerase (RNAP) that catalyzes the transcription in the cytoplasm of viral DNA into RNA using the four ribonucleoside triphosphates as substrates. The chain is DNA-directed RNA polymerase RPB3-11 homolog from Ornithodoros (relapsing fever ticks).